The sequence spans 264 residues: 3-methyl-2-oxobutanoate hydroxymethyltransferase (264 aa).

The Mg(2+) site is built by aspartate 45 and aspartate 84. Residues 45 to 46, aspartate 84, and lysine 112 each bind 3-methyl-2-oxobutanoate; that span reads DS. Mg(2+) is bound at residue glutamate 114. Residue glutamate 181 is the Proton acceptor of the active site.

The protein belongs to the PanB family. In terms of assembly, homodecamer; pentamer of dimers. The cofactor is Mg(2+).

It localises to the cytoplasm. The enzyme catalyses 3-methyl-2-oxobutanoate + (6R)-5,10-methylene-5,6,7,8-tetrahydrofolate + H2O = 2-dehydropantoate + (6S)-5,6,7,8-tetrahydrofolate. The protein operates within cofactor biosynthesis; (R)-pantothenate biosynthesis; (R)-pantoate from 3-methyl-2-oxobutanoate: step 1/2. Its function is as follows. Catalyzes the reversible reaction in which hydroxymethyl group from 5,10-methylenetetrahydrofolate is transferred onto alpha-ketoisovalerate to form ketopantoate. This is 3-methyl-2-oxobutanoate hydroxymethyltransferase from Shewanella denitrificans (strain OS217 / ATCC BAA-1090 / DSM 15013).